The following is a 412-amino-acid chain: Chorismate synthase (412 aa).

Positions 40 and 46 each coordinate NADP(+). Residues 134-136 (RAS), 255-256 (QA), glycine 299, 314-318 (KPIAT), and arginine 340 each bind FMN.

The protein belongs to the chorismate synthase family. In terms of assembly, homotetramer. Requires FMNH2 as cofactor.

It carries out the reaction 5-O-(1-carboxyvinyl)-3-phosphoshikimate = chorismate + phosphate. Its pathway is metabolic intermediate biosynthesis; chorismate biosynthesis; chorismate from D-erythrose 4-phosphate and phosphoenolpyruvate: step 7/7. In terms of biological role, catalyzes the anti-1,4-elimination of the C-3 phosphate and the C-6 proR hydrogen from 5-enolpyruvylshikimate-3-phosphate (EPSP) to yield chorismate, which is the branch point compound that serves as the starting substrate for the three terminal pathways of aromatic amino acid biosynthesis. This reaction introduces a second double bond into the aromatic ring system. This Clavibacter michiganensis subsp. michiganensis (strain NCPPB 382) protein is Chorismate synthase.